The following is a 416-amino-acid chain: Keratin, type I cuticular Ha1 (416 aa).

The segment at 1–56 (MPYNFCLPSLSCRTSCSSRPCVPPSCHSCTLPGACNIPANVSNCNWFCEGSFNGSE) is head. In terms of domain architecture, IF rod spans 56 to 367 (EKETMQFLND…SLLESEDCNL (312 aa)). A coil 1A region spans residues 57 to 91 (KETMQFLNDRLASYLEKVRQLERDNAELENLIRER). Residues 92–102 (SQQQEPLLCPS) are linker 1. Residues 103 to 203 (YQSYFKTIEE…HEQEVNTLRC (101 aa)) are coil 1B. A linker 12 region spans residues 204–219 (QLGDRLNVEVDAAPTV). A coil 2 region spans residues 220–363 (DLNRVLNETR…NTYRSLLESE (144 aa)). The segment at 364-416 (DCNLPSNPCATTNACSKPIGPCLSNPCTSCVPPAPCTPCAPRPRCGPCNSFVR) is tail.

This sequence belongs to the intermediate filament family. Present in scalp but not in hairless skin. Abundantly expressed in the differentiating cortex of growing (anagen) hair. Expression is restricted to the keratinocytes of the hair cortex and is absent from inner root sheath and medulla.

This chain is Keratin, type I cuticular Ha1 (KRT31), found in Homo sapiens (Human).